The following is a 294-amino-acid chain: Cytidine deaminase (294 aa).

CMP/dCMP-type deaminase domains follow at residues 48-168 (DDDA…FGPR) and 186-294 (LKGD…VTLA). A substrate-binding site is contributed by 89 to 91 (NME). His102 lines the Zn(2+) pocket. Glu104 serves as the catalytic Proton donor. The Zn(2+) site is built by Cys129 and Cys132.

The protein belongs to the cytidine and deoxycytidylate deaminase family. As to quaternary structure, homodimer. Zn(2+) is required as a cofactor.

It carries out the reaction cytidine + H2O + H(+) = uridine + NH4(+). The enzyme catalyses 2'-deoxycytidine + H2O + H(+) = 2'-deoxyuridine + NH4(+). In terms of biological role, this enzyme scavenges exogenous and endogenous cytidine and 2'-deoxycytidine for UMP synthesis. This chain is Cytidine deaminase, found in Cronobacter sakazakii (strain ATCC BAA-894) (Enterobacter sakazakii).